A 160-amino-acid chain; its full sequence is MKHLAIYPGSFDPLTKGHLDILQRSLGLFDKVIIAIAVNSNKSTLFSIEERLGFIREVTKGMKGLEIDTFQGLTVDYCNKVGANSIIRGLRAVTDFDYEYAISLMNKKLAPNVETVFLMSSGEYSFISSTIVKEVARHGRDVSNQVPEIVSKALLKKLSQ.

Ser-10 provides a ligand contact to substrate. ATP contacts are provided by residues 10-11 (SF) and His-18. Substrate-binding residues include Lys-42, Thr-74, and Arg-88. ATP contacts are provided by residues 89 to 91 (GLR), Glu-99, and 124 to 130 (YSFISST).

It belongs to the bacterial CoaD family. In terms of assembly, homohexamer. Mg(2+) serves as cofactor.

The protein resides in the cytoplasm. It catalyses the reaction (R)-4'-phosphopantetheine + ATP + H(+) = 3'-dephospho-CoA + diphosphate. The protein operates within cofactor biosynthesis; coenzyme A biosynthesis; CoA from (R)-pantothenate: step 4/5. Its function is as follows. Reversibly transfers an adenylyl group from ATP to 4'-phosphopantetheine, yielding dephospho-CoA (dPCoA) and pyrophosphate. This Leptospira interrogans serogroup Icterohaemorrhagiae serovar copenhageni (strain Fiocruz L1-130) protein is Phosphopantetheine adenylyltransferase.